Consider the following 312-residue polypeptide: Pre-mRNA-splicing factor 38A (312 aa).

Residues 1 to 179 (MANRTVKDAH…VLEEAEQLEP (179 aa)) are N-terminal protein interaction domain. Phosphoserine occurs at positions 11, 193, 194, 209, and 226. Positions 170-204 (VLEEAEQLEPRVSALEEDMDDVESSEEEEEEDEKL) form a coiled coil. The tract at residues 181 to 312 (VSALEEDMDD…SHKKSRRGNE (132 aa)) is disordered. Residues 184–202 (LEEDMDDVESSEEEEEEDE) show a composition bias toward acidic residues. A compositionally biased stretch (basic and acidic residues) spans 203 to 224 (KLERVPSPDHRRRSYRDLDKPR). 2 stretches are compositionally biased toward basic residues: residues 225–294 (RSPA…RSHS) and 301–312 (KKSHKKSRRGNE).

The protein belongs to the PRP38 family. As to quaternary structure, component of the spliceosome B complex. Interacts (via N-terminal interaction domain) with ZMAT2 and MFAP1.

The protein resides in the nucleus. Functionally, involved in pre-mRNA splicing as a component of the spliceosome. This is Pre-mRNA-splicing factor 38A (Prpf38a) from Mus musculus (Mouse).